The primary structure comprises 185 residues: Acireductone dioxygenase (185 aa).

4 residues coordinate Fe(2+): histidine 96, histidine 98, glutamate 102, and histidine 140. The Ni(2+) site is built by histidine 96, histidine 98, glutamate 102, and histidine 140.

This sequence belongs to the acireductone dioxygenase (ARD) family. In terms of assembly, monomer. The cofactor is Fe(2+). Ni(2+) serves as cofactor.

It catalyses the reaction 1,2-dihydroxy-5-(methylsulfanyl)pent-1-en-3-one + O2 = 3-(methylsulfanyl)propanoate + CO + formate + 2 H(+). It carries out the reaction 1,2-dihydroxy-5-(methylsulfanyl)pent-1-en-3-one + O2 = 4-methylsulfanyl-2-oxobutanoate + formate + 2 H(+). It participates in amino-acid biosynthesis; L-methionine biosynthesis via salvage pathway; L-methionine from S-methyl-5-thio-alpha-D-ribose 1-phosphate: step 5/6. In terms of biological role, catalyzes 2 different reactions between oxygen and the acireductone 1,2-dihydroxy-3-keto-5-methylthiopentene (DHK-MTPene) depending upon the metal bound in the active site. Fe-containing acireductone dioxygenase (Fe-ARD) produces formate and 2-keto-4-methylthiobutyrate (KMTB), the alpha-ketoacid precursor of methionine in the methionine recycle pathway. Ni-containing acireductone dioxygenase (Ni-ARD) produces methylthiopropionate, carbon monoxide and formate, and does not lie on the methionine recycle pathway. This chain is Acireductone dioxygenase, found in Hahella chejuensis (strain KCTC 2396).